Reading from the N-terminus, the 461-residue chain is Argininosuccinate lyase (461 aa).

It belongs to the lyase 1 family. Argininosuccinate lyase subfamily.

It is found in the cytoplasm. The catalysed reaction is 2-(N(omega)-L-arginino)succinate = fumarate + L-arginine. Its pathway is amino-acid biosynthesis; L-arginine biosynthesis; L-arginine from L-ornithine and carbamoyl phosphate: step 3/3. This is Argininosuccinate lyase from Dehalococcoides mccartyi (strain ATCC BAA-2266 / KCTC 15142 / 195) (Dehalococcoides ethenogenes (strain 195)).